The chain runs to 1361 residues: Cell migration-inducing and hyaluronan-binding protein (1361 aa).

The N-terminal stretch at 1-30 (MGAAGRQDFLFKAMLTISWLTLTCFPGATS) is a signal peptide. One can recognise a G8 domain in the interval 44–166 (QPWNPGHDQD…KKLSWTFLNK (123 aa)). N-linked (GlcNAc...) asparagine glycans are attached at residues asparagine 119, asparagine 165, asparagine 312, asparagine 370, and asparagine 420. A GG-type lectin 1 domain is found at 176-317 (GGYFFERSWG…GEYFNVSLSS (142 aa)). The tract at residues 295-591 (AAARVFKLFQ…IHHTFSRCVT (297 aa)) is necessary for its endoplasmic reticulum (ER) retention and interaction with HSPA5. 4 PbH1 repeats span residues 572–594 (DPPTYIRDLSIHHTFSRCVTVHG), 595–617 (SNGLLIKDVVGYNSLGHCFFTED), 719–741 (IPLGKFYNNRAHSNYRAGMIIDN), and 798–819 (GGDVWLDSCRFADNGIGLTLAS). N-linked (GlcNAc...) asparagine glycans are attached at residues asparagine 889 and asparagine 921. Residues 1227–1361 (NDFAYIEVDG…PIPVVKKKKL (135 aa)) enclose the GG-type lectin 2 domain.

The protein belongs to the CEMIP family. Interacts with EPHA2 and ITPR3. Interacts with HSPA5/BIP; the interaction induces calcium leakage from the endoplasmic reticulum and cell migration. Interacts with clathrin heavy chain/CLTC. Post-translationally, N-glycosylated; glycosylation is not necessary for HA-binding. Expressed in dermal and in synovial fibroblasts. Strongly expressed in gastric cancers compared with the paired normal tissues. Strongly expressed in both ductal carcinoma and invasive breast cancer cells compared with benign epithelial cells (at protein level). Strongly expressed in brain, placenta, prostate, breast, lung and testis. Expressed in fibroblasts, epithelial cells and cancer cells. In ear, it is specifically expressed in inner ear. Expressed in cochlea and vestibule tissues. Strongly expressed in gastric cancers compared with the paired normal tissues. Strongly expressed in colon adenocarcinomas compared with normal colonic mucosas. Strongly expressed in breast cancer as compared to normal breast tissue.

Its subcellular location is the nucleus. The protein localises to the cytoplasm. It is found in the endoplasmic reticulum. The protein resides in the cell membrane. It localises to the membrane. Its subcellular location is the clathrin-coated pit. The protein localises to the secreted. The enzyme catalyses Random hydrolysis of (1-&gt;4)-linkages between N-acetyl-beta-D-glucosamine and D-glucuronate residues in hyaluronate.. Its activity is regulated as follows. Activity is up-regulated by histamine. Its function is as follows. Mediates depolymerization of hyaluronic acid (HA) via the cell membrane-associated clathrin-coated pit endocytic pathway. Binds to hyaluronic acid. Hydrolyzes high molecular weight hyaluronic acid to produce an intermediate-sized product, a process that may occur through rapid vesicle endocytosis and recycling without intracytoplasmic accumulation or digestion in lysosomes. Involved in hyaluronan catabolism in the dermis of the skin and arthritic synovium. Positively regulates epithelial-mesenchymal transition (EMT), and hence tumor cell growth, invasion and cancer dissemination. In collaboration with HSPA5/BIP, promotes cancer cell migration in a calcium and PKC-dependent manner. May be involved in hearing. The sequence is that of Cell migration-inducing and hyaluronan-binding protein from Homo sapiens (Human).